We begin with the raw amino-acid sequence, 263 residues long: MDFKEILYNVDNGVATLTLNRPEVSNGFNIPICEEILKAIDIAKKDDTVQILLINANGKVFSVGGDLVEMQRAVDADDVQSLVRIAELVNKISFALKRLPKPVVMSTDGAVAGAAANIAVAADFCIASDKTRFIQAFVNVGLAPDAGGLFLLTRAIGITRATQLAMTGEALNAEKALEYGIVYKVCEPEKLEKITDRVITRLKRGSVNSYKAIKEMVWQSSFAGWQEYEDLELELQKSLAFTNDFKEGVRAYTEKRRPKFTGK.

It belongs to the enoyl-CoA hydratase/isomerase family. Homotetramer.

The enzyme catalyses (2E)-decenoyl-[ACP] = (3Z)-decenoyl-[ACP]. Its pathway is lipid metabolism; fatty acid biosynthesis. Its function is as follows. Catalyzes the isomerization of trans-2-decenoyl-ACP to cis-3-decenoyl-ACP. Required for survival at low pH. In Streptococcus mutans serotype c (strain ATCC 700610 / UA159), this protein is Trans-2-decenoyl-[acyl-carrier-protein] isomerase (fabM).